The following is a 290-amino-acid chain: Phosphatidylserine decarboxylase proenzyme (290 aa).

Catalysis depends on charge relay system; for autoendoproteolytic cleavage activity residues D96, H153, and S257. Catalysis depends on S257, which acts as the Schiff-base intermediate with substrate; via pyruvic acid; for decarboxylase activity. Pyruvic acid (Ser); by autocatalysis is present on S257.

Belongs to the phosphatidylserine decarboxylase family. PSD-B subfamily. Prokaryotic type I sub-subfamily. In terms of assembly, heterodimer of a large membrane-associated beta subunit and a small pyruvoyl-containing alpha subunit. Pyruvate serves as cofactor. In terms of processing, is synthesized initially as an inactive proenzyme. Formation of the active enzyme involves a self-maturation process in which the active site pyruvoyl group is generated from an internal serine residue via an autocatalytic post-translational modification. Two non-identical subunits are generated from the proenzyme in this reaction, and the pyruvate is formed at the N-terminus of the alpha chain, which is derived from the carboxyl end of the proenzyme. The autoendoproteolytic cleavage occurs by a canonical serine protease mechanism, in which the side chain hydroxyl group of the serine supplies its oxygen atom to form the C-terminus of the beta chain, while the remainder of the serine residue undergoes an oxidative deamination to produce ammonia and the pyruvoyl prosthetic group on the alpha chain. During this reaction, the Ser that is part of the protease active site of the proenzyme becomes the pyruvoyl prosthetic group, which constitutes an essential element of the active site of the mature decarboxylase.

It is found in the cell membrane. It carries out the reaction a 1,2-diacyl-sn-glycero-3-phospho-L-serine + H(+) = a 1,2-diacyl-sn-glycero-3-phosphoethanolamine + CO2. Its pathway is phospholipid metabolism; phosphatidylethanolamine biosynthesis; phosphatidylethanolamine from CDP-diacylglycerol: step 2/2. Its function is as follows. Catalyzes the formation of phosphatidylethanolamine (PtdEtn) from phosphatidylserine (PtdSer). This Haemophilus influenzae (strain ATCC 51907 / DSM 11121 / KW20 / Rd) protein is Phosphatidylserine decarboxylase proenzyme.